The sequence spans 159 residues: MRRAVCPGSFDPITNGHLDIIARASSLYDEVYVAVMINQAKKGLFEIEERIDLIRRVTAEYGNVRVESFHGLLVDFCKQREIPAIVKGLRAVSDFDYELQMAQMNNGLSGVETLFIPTNPTYSFLSSSLVKEVATWGGDVAHLVPPLVLEALTERLRNR.

A substrate-binding site is contributed by serine 9. Residues 9–10 (SF) and histidine 17 each bind ATP. Residues lysine 41, leucine 73, and lysine 87 each coordinate substrate. Residues 88–90 (GLR), glutamate 98, and 122–128 (YSFLSSS) each bind ATP.

This sequence belongs to the bacterial CoaD family. As to quaternary structure, homohexamer. The cofactor is Mg(2+).

It localises to the cytoplasm. It catalyses the reaction (R)-4'-phosphopantetheine + ATP + H(+) = 3'-dephospho-CoA + diphosphate. The protein operates within cofactor biosynthesis; coenzyme A biosynthesis; CoA from (R)-pantothenate: step 4/5. Its function is as follows. Reversibly transfers an adenylyl group from ATP to 4'-phosphopantetheine, yielding dephospho-CoA (dPCoA) and pyrophosphate. This chain is Phosphopantetheine adenylyltransferase, found in Streptomyces coelicolor (strain ATCC BAA-471 / A3(2) / M145).